We begin with the raw amino-acid sequence, 615 residues long: Sodium-coupled neutral amino acid transporter 9 homolog (615 aa).

At 1-165 the chain is on the cytoplasmic side; the sequence is MPPFFAEFTE…LKDVSGKQGS (165 aa). Positions 41-65 are disordered; the sequence is VDDNDTDPLLDDEPPRRLPPAGGVP. Acidic residues predominate over residues 42–52; sequence DDNDTDPLLDD. The chain crosses the membrane as a helical span at residues 166–186; that stretch reads IVTIFSIWNTMMGTSLLAMPW. The important for arginine binding and amino acid transport stretch occupies residues 175–180; that stretch reads TMMGTS. The Lumenal segment spans residues 187 to 192; the sequence is ALQQAG. A helical transmembrane segment spans residues 193–213; sequence LVLGIIIMLSMAAICFYTAYI. Residues 214–246 lie on the Cytoplasmic side of the membrane; it reads VIESPKRLQDLSVDPLLAEFSDVCKSLFGRIGE. The helical transmembrane segment at 247-273 threads the bilayer; that stretch reads YCAVVFSVCVLIGGVIVYWVLMSNFLY. Topologically, residues 274–341 are lumenal; that stretch reads YTGAVVYESM…TGDDSWSFDK (68 aa). Asparagine 286 and asparagine 295 each carry an N-linked (GlcNAc...) asparagine glycan. An intrachain disulfide couples cysteine 304 to cysteine 478. Residues 342 to 358 traverse the membrane as a helical segment; sequence FWTLRGTVPIYLAFALF. The Cytoplasmic portion of the chain corresponds to 359 to 367; it reads PLMNFKSPT. Residues 368–392 form a helical membrane-spanning segment; it reads FFTKFNVLGTISVMYLLMFVFSKLL. Residues 393–413 are Lumenal-facing; it reads ECGVNMDFSNPKSIHYVQLAN. A helical membrane pass occupies residues 414-434; it reads MHFPALSGTLTLSYFIHNAVL. The Cytoplasmic portion of the chain corresponds to 435–451; sequence TILRNQKHPENNARDLS. The chain crosses the membrane as a helical span at residues 452-472; sequence IGYCLVAFCYVFIGFTFFAAF. Topologically, residues 473 to 491 are lumenal; that stretch reads PVQRSCISDNFLNNFGAGD. Residues 492–512 form a helical membrane-spanning segment; sequence VLSSTARLFLLFQMITVLPLL. The Cytoplasmic portion of the chain corresponds to 513-533; sequence MFLVRSQLFYAIFGQTWPGAI. A helical transmembrane segment spans residues 534–554; the sequence is RVIILNVLLIAVAVGFATFYP. Over 555 to 561 the chain is Lumenal; that stretch reads NVGSILR. A helical transmembrane segment spans residues 562–582; sequence YVGSISGLVYVFALPAMVYIK. Over 583–594 the chain is Cytoplasmic; it reads QSEAAGTLTPMK. The chain crosses the membrane as a helical span at residues 595 to 615; sequence KYAHYGIIVIGVANLIAQFVI.

This sequence belongs to the amino acid/polyamine transporter 2 family. SLC38A9 subfamily.

The protein localises to the lysosome membrane. The protein resides in the late endosome membrane. Its activity is regulated as follows. Amino acid transport is sodium-dependent. Transport of leucine, tyrosine and phenylalanine is increased by arginine binding. Functionally, lysosomal amino acid transporter involved in the activation of mTORC1 in response to amino acid levels. Probably acts as an amino acid sensor of the Rag GTPases and Ragulator complexes, 2 complexes involved in amino acid sensing and activation of mTORC1, a signaling complex promoting cell growth in response to growth factors, energy levels, and amino acids. In Caenorhabditis elegans, this protein is Sodium-coupled neutral amino acid transporter 9 homolog.